The primary structure comprises 2528 residues: Highly reducing polyketide synthase pspA (2528 aa).

The interval M1 to P53 is disordered. Residues D24–S42 are compositionally biased toward polar residues. One can recognise a Ketosynthase family 3 (KS3) domain in the interval V63–S483. Residues C235, H371, and H406 each act as for beta-ketoacyl synthase activity in the active site. The malonyl-CoA:ACP transacylase (MAT) domain stretch occupies residues T590–E909. The N-terminal hotdog fold stretch occupies residues H961–E1089. Residues H961–I1230 form a dehydratase (DH) domain region. The PKS/mFAS DH domain occupies H961–A1244. H993 functions as the Proton acceptor; for dehydratase activity in the catalytic mechanism. Positions P1099–A1244 are C-terminal hotdog fold. The active-site Proton donor; for dehydratase activity is D1160. A methyltransferase (CMet) domain region spans residues V1409–H1587. The tract at residues G1803 to I2119 is enoyl reductase (ER) (ER) domain. The interval R2143–Q2322 is ketoreductase (KR) domain. The Carrier domain occupies E2447 to L2525. The residue at position 2485 (S2485) is an O-(pantetheine 4'-phosphoryl)serine.

It carries out the reaction 9 malonyl-CoA + acetyl-CoA + S-adenosyl-L-methionine + 13 NADPH + 20 H(+) = soppiline A + S-adenosyl-L-homocysteine + 9 CO2 + 13 NADP(+) + 10 CoA + 7 H2O. Its pathway is secondary metabolite biosynthesis. In terms of biological role, highly reducing polyketide synthase; part of the gene cluster that mediates the biosynthesis of the alkylresorcinols called soppilines. The biosynthesis starts with the HR-PKS pspA-catalyzed carbon chain assembly through nine chain elongation cycles, using acetyl CoA and malonyl CoA as a starter and extender units, respectively, to produce the polyketide soppiline A. In the first round, the KR, DH, and CMeT domains work to produce 2-methyl-2-butenyl thioester. In rounds 2 to 5, the KR, DH, and ER domains fully catalyze the reduction of the elongated beta-ketothioester, resulting in the insertion of eight methylene units. The unusual Z,E,Z-triene motif is likely constructed during rounds 6 to 8. Typically, the DH domain introduces a double bond at an alpha,beta-position of an elongated polyketide chain, with the dehydration of a beta-hydroxy group. The last extension cycle would be carried out with L-oriented beta-ketoreduction by the KR domain to produce beta-hydroxy carboxylic acid soppiline A. The type III PKS pspB intercepts the elongated polyketide chain at round 8 from the HR-PKS pspA, followed by a tri-keto extension and decarboxylative aldol cyclization to produce 1,3,5-trisubstituted alkylresorcinol soppiline B. Subsequently, the cytochrome P450 monooxygenase pspC catalyzes three-step oxidations at the C-4 methyl group to carboxylic acid to yield soppiline C. The polypeptide is Highly reducing polyketide synthase pspA (Penicillium soppii).